The primary structure comprises 550 residues: Calcyphosin-2 (550 aa).

2 disordered regions span residues 1–20 (MVPP…DNFS) and 175–198 (ISDP…DSER). Residues 181–190 (DLNTKNQESS) show a composition bias toward polar residues. 3 consecutive EF-hand domains span residues 379–414 (RILT…FHLE), 415–452 (VSEQ…EMNE), and 453–488 (YRKS…KKHP). Ca(2+) contacts are provided by aspartate 466, asparagine 468, threonine 470, and aspartate 477.

This chain is Calcyphosin-2 (Caps2), found in Mus musculus (Mouse).